The primary structure comprises 231 residues: uncharacterized protein (231 aa).

A run of 4 helical transmembrane segments spans residues 39–59 (FCIS…YGPF), 70–90 (ALSL…VPVI), 156–176 (AIIS…GGSI), and 189–206 (IVAI…NMFF).

The protein belongs to the FliR/MopE/SpaR family.

The protein localises to the cell membrane. This is an uncharacterized protein from Escherichia coli (strain K12).